Reading from the N-terminus, the 1293-residue chain is Phosphoribosylformylglycinamidine synthase (1293 aa).

Residues 305–316 and Ala676 contribute to the ATP site; that span reads GAATGSGGEIRD. Residues 305–327 form a disordered region; that stretch reads GAATGSGGEIRDEGATGRGSKPK. The Mg(2+) site is built by Asp677, Glu716, Asn720, and Asp884. Ser886 contributes to the ATP binding site. In terms of domain architecture, Glutamine amidotransferase type-1 spans 1040 to 1293; that stretch reads MAILREQGVN…MFRNARVNLG (254 aa). Cys1133 acts as the Nucleophile in catalysis. Catalysis depends on residues His1258 and Glu1260.

In the N-terminal section; belongs to the FGAMS family. In terms of assembly, monomer.

It localises to the cytoplasm. The enzyme catalyses N(2)-formyl-N(1)-(5-phospho-beta-D-ribosyl)glycinamide + L-glutamine + ATP + H2O = 2-formamido-N(1)-(5-O-phospho-beta-D-ribosyl)acetamidine + L-glutamate + ADP + phosphate + H(+). Its pathway is purine metabolism; IMP biosynthesis via de novo pathway; 5-amino-1-(5-phospho-D-ribosyl)imidazole from N(2)-formyl-N(1)-(5-phospho-D-ribosyl)glycinamide: step 1/2. Phosphoribosylformylglycinamidine synthase involved in the purines biosynthetic pathway. Catalyzes the ATP-dependent conversion of formylglycinamide ribonucleotide (FGAR) and glutamine to yield formylglycinamidine ribonucleotide (FGAM) and glutamate. In Shewanella oneidensis (strain ATCC 700550 / JCM 31522 / CIP 106686 / LMG 19005 / NCIMB 14063 / MR-1), this protein is Phosphoribosylformylglycinamidine synthase.